A 560-amino-acid polypeptide reads, in one-letter code: 2-hydroxyacyl-CoA lyase (560 aa).

Position 49 (glutamate 49) interacts with thiamine diphosphate. 2 residues coordinate Mg(2+): aspartate 446 and asparagine 473. The Peroxisomal target signal 1 (PTS1) motif lies at 558–560 (PRL).

Belongs to the TPP enzyme family. Requires Mg(2+) as cofactor. The cofactor is thiamine diphosphate.

It is found in the cytoplasm. It localises to the peroxisome matrix. The enzyme catalyses an (R)-2-hydroxy-long-chain-fatty acyl-CoA = a long-chain fatty aldehyde + formyl-CoA. It catalyses the reaction a 2-hydroxy-3-methyl fatty acyl-CoA = a 2-methyl-branched fatty aldehyde + formyl-CoA. Functionally, catalyzes a carbon-carbon cleavage reaction; cleaves a 2-hydroxy-3-methylacyl-CoA into formyl-CoA and a 2-methyl-branched fatty aldehyde. This Saccharomyces cerevisiae (strain ATCC 204508 / S288c) (Baker's yeast) protein is 2-hydroxyacyl-CoA lyase.